Consider the following 591-residue polypeptide: Probable anion transporter 4, chloroplastic (591 aa).

The disordered stretch occupies residues 1-38 (MAMGAVLSSRTFASPLSSSGKQHPPQNNKCTCSSPPTR). Residues 1-76 (MAMGAVLSSR…LSARFHQPVV (76 aa)) constitute a chloroplast transit peptide. Over residues 8–36 (SSRTFASPLSSSGKQHPPQNNKCTCSSPP) the composition is skewed to polar residues. Transmembrane regions (helical) follow at residues 184 to 204 (VVLL…NMSI), 220 to 240 (VGLI…LGGI), 249 to 269 (VVLG…PLAA), 271 to 291 (IGLP…GVAM), 313 to 333 (LVYS…PLLI), 336 to 356 (FGWP…FALW), 402 to 422 (VWAL…LLTW), 440 to 460 (LLCV…GWIA), 475 to 495 (KIMQ…LSKV), 531 to 551 (AGVL…FGTA), and 565 to 585 (VFQV…VFST).

The protein belongs to the major facilitator superfamily. Sodium/anion cotransporter (TC 2.A.1.14) family.

The protein resides in the plastid. The protein localises to the chloroplast membrane. In terms of biological role, probable anion transporter. This chain is Probable anion transporter 4, chloroplastic (PHT4;4), found in Oryza sativa subsp. japonica (Rice).